A 198-amino-acid polypeptide reads, in one-letter code: Recombination protein RecR (198 aa).

The C4-type zinc-finger motif lies at C57–C72. In terms of domain architecture, Toprim spans S80–P175.

It belongs to the RecR family.

In terms of biological role, may play a role in DNA repair. It seems to be involved in an RecBC-independent recombinational process of DNA repair. It may act with RecF and RecO. This is Recombination protein RecR from Bacillus cytotoxicus (strain DSM 22905 / CIP 110041 / 391-98 / NVH 391-98).